The following is a 610-amino-acid chain: Isocitrate dehydrogenase kinase/phosphatase (610 aa).

ATP is bound by residues 359 to 365 (APGFKGT) and Lys-380. Residue Asp-419 is part of the active site.

This sequence belongs to the AceK family.

The protein localises to the cytoplasm. The catalysed reaction is L-seryl-[isocitrate dehydrogenase] + ATP = O-phospho-L-seryl-[isocitrate dehydrogenase] + ADP + H(+). Its function is as follows. Bifunctional enzyme which can phosphorylate or dephosphorylate isocitrate dehydrogenase (IDH) on a specific serine residue. This is a regulatory mechanism which enables bacteria to bypass the Krebs cycle via the glyoxylate shunt in response to the source of carbon. When bacteria are grown on glucose, IDH is fully active and unphosphorylated, but when grown on acetate or ethanol, the activity of IDH declines drastically concomitant with its phosphorylation. The sequence is that of Isocitrate dehydrogenase kinase/phosphatase from Rhodopseudomonas palustris (strain TIE-1).